The following is a 1007-amino-acid chain: Serine/threonine-protein kinase PRP4 homolog (1007 aa).

A disordered region spans residues 1–104 (MAATEPPSLR…PAKRTKLDDL (104 aa)). The residue at position 2 (Ala2) is an N-acetylalanine. A phosphoserine mark is found at Ser8, Ser21, Ser24, and Ser33. Basic residues-rich tracts occupy residues 40 to 60 (KHSR…KHKH) and 68 to 82 (KKHK…HKRK). Positions 83 to 92 (EVLDASDKEG) are enriched in basic and acidic residues. Ser88 and Ser94 each carry phosphoserine. Position 100 is an N6-acetyllysine; alternate (Lys100). Lys100 participates in a covalent cross-link: Glycyl lysine isopeptide (Lys-Gly) (interchain with G-Cter in SUMO2); alternate. Residue Lys112 forms a Glycyl lysine isopeptide (Lys-Gly) (interchain with G-Cter in SUMO2) linkage. Residue Lys118 forms a Glycyl lysine isopeptide (Lys-Gly) (interchain with G-Cter in SUMO2); alternate linkage. Lys118 is covalently cross-linked (Glycyl lysine isopeptide (Lys-Gly) (interchain with G-Cter in SUMO1); alternate). Residue Ser132 is modified to Phosphoserine. Phosphotyrosine is present on Tyr141. 2 disordered regions span residues 141–535 (YESG…EDEE) and 560–583 (NISV…SPDD). Ser143, Ser145, and Ser167 each carry phosphoserine. Low complexity predominate over residues 158–169 (GNRSSTRSSSTR). Glycyl lysine isopeptide (Lys-Gly) (interchain with G-Cter in SUMO2) cross-links involve residues Lys171 and Lys178. Basic residues-rich tracts occupy residues 180–203 (SAKK…RKSK) and 215–231 (RSKS…SKRS). Phosphoserine occurs at positions 240, 242, 258, 278, 292, and 294. Residues 248-271 (RSQEKVGKARSPADEKIKSEEKGK) show a composition bias toward basic and acidic residues. A compositionally biased stretch (basic and acidic residues) spans 294–303 (SPVDLRDKSK). Residues 304–315 (DRRSRSKERKSK) are compositionally biased toward basic residues. Basic and acidic residues predominate over residues 316-325 (RSEIDKEKKP). Phosphoserine occurs at positions 328, 354, 356, 366, and 368. Basic residues predominate over residues 342 to 367 (PSRRPGRSPKRRSLSPKQRDKSRRSR). Residue Thr385 is modified to Phosphothreonine. Ser387 carries the phosphoserine modification. 2 stretches are compositionally biased toward basic and acidic residues: residues 395–408 (RSLE…ERRR) and 415–429 (RPRD…RSKD). A phosphoserine mark is found at Ser427, Ser431, and Ser437. A compositionally biased stretch (basic residues) spans 438–497 (PSRRRSRSPIRRRSRSPLRRSRSPRRRSRSPRRRDRSRRSRSRLRRRSRSRGGHRRRSRS). A phosphoserine mark is found at Ser518, Ser519, Ser520, Ser565, Ser569, Ser576, Ser578, and Ser580. Residues 518–535 (SSSDDNLEDFDVEEEDEE) show a composition bias toward acidic residues. The segment covering 562-581 (SVPSEPSSPQSSTRSRSPSP) has biased composition (low complexity). Glycyl lysine isopeptide (Lys-Gly) (interchain with G-Cter in SUMO2) cross-links involve residues Lys593 and Lys659. A Protein kinase domain is found at 687–1003 (YNVYGYTGQG…INQALQHAFI (317 aa)). ATP-binding positions include 693-701 (TGQGVFSNV) and Lys717. Lys717 carries the N6-acetyllysine modification. Asp815 serves as the catalytic Proton acceptor. Phosphotyrosine is present on Tyr849. Ser852 bears the Phosphoserine mark.

It belongs to the protein kinase superfamily. CMGC Ser/Thr protein kinase family. In terms of assembly, interacts with CLK1 C-terminus. Associates with the U5 snRNP and NCOR1 deacetylase complexes. Identified in the spliceosome C complex. Post-translationally, phosphorylated by CLK1. Autophosphorylated; phosphorylation inhibits interaction with its targets, such as PRPF6 or SMARCA4.

The protein localises to the nucleus. It is found in the chromosome. The protein resides in the centromere. Its subcellular location is the kinetochore. It carries out the reaction L-seryl-[protein] + ATP = O-phospho-L-seryl-[protein] + ADP + H(+). It catalyses the reaction L-threonyl-[protein] + ATP = O-phospho-L-threonyl-[protein] + ADP + H(+). In terms of biological role, serine/threonine kinase involved in spliceosomal assembly as well as mitosis and signaling regulation. Connects chromatin mediated regulation of transcription and pre-mRNA splicing. During spliceosomal assembly, interacts with and phosphorylates PRPF6 and PRPF31, components of the U4/U6-U5 tri-small nuclear ribonucleoprotein (snRNP), to facilitate the formation of the spliceosome B complex. Plays a role in regulating transcription and the spindle assembly checkpoint (SAC). Associates with U5 snRNP and NCOR1 deacetylase complexes which may allow a coordination of pre-mRNA splicing with chromatin remodeling events involved in transcriptional regulation. Associates and probably phosphorylates SMARCA4 and NCOR1. Phosphorylates SRSF1. Associates with kinetochores during mitosis and is necessary for recruitment and maintenance of the checkpoint proteins such as MAD1L1 and MAD12L1 at the kinetochores. Phosphorylates and regulates the activity of the transcription factors such as ELK1 and KLF13. Phosphorylates nuclear YAP1 and WWTR1/TAZ which induces nuclear exclusion and regulates Hippo signaling pathway, involved in tissue growth control. This Rattus norvegicus (Rat) protein is Serine/threonine-protein kinase PRP4 homolog (Prp4k).